The primary structure comprises 586 residues: Merlin (586 aa).

A Phosphoserine modification is found at S9. Residues 18–307 (FTVRIVTMDA…GNHDLFMRRR (290 aa)) form the FERM domain. Residues 325–354 (KARKQMERQRLAREKQMREEAERSRDEPER) form a disordered region. S514 carries the phosphoserine; by PAK modification. The segment at 557–586 (LHSEHSDSGTSSKHNTIKKPQAQGRRPICI) is disordered.

Interacts with NHERF1, HGS and AGAP2. Interacts with SGSM3. Interacts (via FERM domain) with MPP1. Interacts with LAYN and WWC1. Interacts with the CUL4A-RBX1-DDB1-VprBP/DCAF1 E3 ubiquitin-protein ligase complex. The unphosphorylated form interacts (via FERM domain) with VPRBP/DCAF1. Interacts (via FERM domain) with NOP53; the interaction is direct. Interacts with SCHIP1; the interaction is direct. Post-translationally, ubiquitinated by the CUL4A-RBX1-DDB1-DCAF1/VprBP E3 ubiquitin-protein ligase complex for ubiquitination and subsequent proteasome-dependent degradation. Phosphorylation of Ser-514 inhibits nuclear localization by disrupting the intramolecular association of the FERM domain with the C-terminal tail. The dephosphorylation of Ser-514 favors the interaction with NOP53.

It localises to the cell membrane. Its subcellular location is the cell projection. The protein resides in the cytoplasm. The protein localises to the cytoskeleton. It is found in the nucleus. In terms of biological role, probable regulator of the Hippo/SWH (Sav/Wts/Hpo) signaling pathway, a signaling pathway that plays a pivotal role in tumor suppression by restricting proliferation and promoting apoptosis. Along with WWC1 can synergistically induce the phosphorylation of LATS1 and LATS2 and can probably function in the regulation of the Hippo/SWH (Sav/Wts/Hpo) signaling pathway. May act as a membrane stabilizing protein. May inhibit PI3 kinase by binding to AGAP2 and impairing its stimulating activity. Suppresses cell proliferation and tumorigenesis by inhibiting the CUL4A-RBX1-DDB1-VprBP/DCAF1 E3 ubiquitin-protein ligase complex Plays a role in lens development and is required for complete fiber cell terminal differentiation, maintenance of cell polarity and separation of the lens vesicle from the corneal epithelium. The polypeptide is Merlin (Nf2) (Rattus norvegicus (Rat)).